Here is a 107-residue protein sequence, read N- to C-terminus: Large ribosomal subunit protein uL24 (107 aa).

The protein belongs to the universal ribosomal protein uL24 family. As to quaternary structure, part of the 50S ribosomal subunit.

Its function is as follows. One of two assembly initiator proteins, it binds directly to the 5'-end of the 23S rRNA, where it nucleates assembly of the 50S subunit. Functionally, one of the proteins that surrounds the polypeptide exit tunnel on the outside of the subunit. This Mesomycoplasma hyopneumoniae (strain J / ATCC 25934 / NCTC 10110) (Mycoplasma hyopneumoniae) protein is Large ribosomal subunit protein uL24.